The chain runs to 144 residues: Transcriptional regulator SlyA (144 aa).

One can recognise an HTH marR-type domain in the interval 2 to 135 (ESPLGSDLSR…LSQMISKLEK (134 aa)). Positions 49–72 (QIQLAKAIGIEQPSLVRTLDQLEE) form a DNA-binding region, H-T-H motif.

Belongs to the SlyA family. Homodimer.

Its function is as follows. Transcription regulator that can specifically activate or repress expression of target genes. The chain is Transcriptional regulator SlyA from Wigglesworthia glossinidia brevipalpis.